The chain runs to 212 residues: Lysozyme g-like protein 2 (212 aa).

An N-terminal signal peptide occupies residues 1 to 19 (MLSSVVFWGLIALIGTSRG). Intrachain disulfides connect cysteine 39–cysteine 92 and cysteine 53–cysteine 61. Residue glutamate 105 is part of the active site.

The protein belongs to the glycosyl hydrolase 23 family. In terms of tissue distribution, strong expression detected in the eye and weak expression in the testis. No expression is observed in any other tissues.

It is found in the secreted. Its function is as follows. May act as a potent antibacterial protein that may play a role in the innate immunity. In Homo sapiens (Human), this protein is Lysozyme g-like protein 2 (LYG2).